A 177-amino-acid polypeptide reads, in one-letter code: Large ribosomal subunit protein uL6 (177 aa).

Belongs to the universal ribosomal protein uL6 family. Part of the 50S ribosomal subunit.

Its function is as follows. This protein binds to the 23S rRNA, and is important in its secondary structure. It is located near the subunit interface in the base of the L7/L12 stalk, and near the tRNA binding site of the peptidyltransferase center. This Bradyrhizobium sp. (strain ORS 278) protein is Large ribosomal subunit protein uL6.